A 303-amino-acid polypeptide reads, in one-letter code: Biphenyl-2,3-diol 1,2-dioxygenase (303 aa).

2 VOC domains span residues 5 to 119 (SLGY…IYYG) and 143 to 264 (GLGH…YGWS). The Fe cation site is built by histidine 146, histidine 210, and glutamate 260. The tract at residues 283-303 (WGHKSVRDKALRATKHEQQPE) is disordered. The segment covering 287 to 303 (SVRDKALRATKHEQQPE) has biased composition (basic and acidic residues).

It belongs to the extradiol ring-cleavage dioxygenase family. As to quaternary structure, homooctamer. Fe(2+) serves as cofactor.

It catalyses the reaction biphenyl-2,3-diol + O2 = 2-hydroxy-6-oxo-6-phenylhexa-2,4-dienoate + H(+). It participates in xenobiotic degradation; biphenyl degradation; 2-hydroxy-2,4-pentadienoate and benzoate from biphenyl: step 3/4. This Metapseudomonas furukawaii (Pseudomonas furukawaii) protein is Biphenyl-2,3-diol 1,2-dioxygenase (bphC).